The following is a 356-amino-acid chain: GTPase Obg (356 aa).

Residues 1-159 (MKFLDQAKVY…RWIWLRLKLI (159 aa)) enclose the Obg domain. The OBG-type G domain occupies 160-328 (ADAGLVGLPN…ALYAIAQHLG (169 aa)). Residues 166 to 173 (GLPNAGKS), 191 to 195 (FTTLH), 213 to 216 (DIPG), 280 to 283 (NKID), and 309 to 311 (SGV) contribute to the GTP site. Residues Ser173 and Thr193 each contribute to the Mg(2+) site. The tract at residues 333–356 (DIPLPKPSNADEEDPDTDQPWSPV) is disordered.

Belongs to the TRAFAC class OBG-HflX-like GTPase superfamily. OBG GTPase family. Monomer. Requires Mg(2+) as cofactor.

Its subcellular location is the cytoplasm. In terms of biological role, an essential GTPase which binds GTP, GDP and possibly (p)ppGpp with moderate affinity, with high nucleotide exchange rates and a fairly low GTP hydrolysis rate. Plays a role in control of the cell cycle, stress response, ribosome biogenesis and in those bacteria that undergo differentiation, in morphogenesis control. The chain is GTPase Obg from Hyphomonas neptunium (strain ATCC 15444).